We begin with the raw amino-acid sequence, 122 residues long: Histone H2B (122 aa).

The disordered stretch occupies residues 1–31; sequence MPPKPSGKGQKKAGKAKGAPSTNKKRKRKRK. Pro-2 is subject to N,N-dimethylproline. An Isoglutamyl lysine isopeptide (Gln-Lys) (interchain with K-5 in histone H4) cross-link involves residue Gln-10. O-linked (GlcNAc) serine glycosylation occurs at Ser-109. Lys-117 is covalently cross-linked (Glycyl lysine isopeptide (Lys-Gly) (interchain with G-Cter in ubiquitin)).

The protein belongs to the histone H2B family. In terms of assembly, the nucleosome is a histone octamer containing two molecules each of H2A, H2B, H3 and H4 assembled in one H3-H4 heterotetramer and two H2A-H2B heterodimers. The octamer wraps approximately 147 bp of DNA. Monoubiquitination of Lys-117 gives a specific tag for epigenetic transcriptional activation and is also prerequisite for histone H3 'Lys-4' and 'Lys-79' methylation. Post-translationally, glcNAcylation at Ser-109 promotes monoubiquitination of Lys-117. It fluctuates in response to extracellular glucose, and associates with transcribed genes.

The protein resides in the nucleus. It is found in the chromosome. In terms of biological role, core component of nucleosome. Nucleosomes wrap and compact DNA into chromatin, limiting DNA accessibility to the cellular machineries which require DNA as a template. Histones thereby play a central role in transcription regulation, DNA repair, DNA replication and chromosomal stability. DNA accessibility is regulated via a complex set of post-translational modifications of histones, also called histone code, and nucleosome remodeling. This Patiria pectinifera (Starfish) protein is Histone H2B.